The sequence spans 71 residues: Putative defensin-like protein 303 (71 aa).

The N-terminal stretch at 1-25 (MKSNKATFFLGLLLVYAFCIMLIES) is a signal peptide. 3 disulfides stabilise this stretch: cysteine 27-cysteine 45, cysteine 33-cysteine 50, and cysteine 39-cysteine 52.

This sequence belongs to the DEFL family.

The protein resides in the secreted. This chain is Putative defensin-like protein 303, found in Arabidopsis thaliana (Mouse-ear cress).